A 242-amino-acid polypeptide reads, in one-letter code: 7-cyano-7-deazaguanine synthase (242 aa).

12-22 lines the ATP pocket; that stretch reads FSGGQDSATCL. The Zn(2+) site is built by cysteine 200, cysteine 215, cysteine 218, and cysteine 221.

The protein belongs to the QueC family. Requires Zn(2+) as cofactor.

It carries out the reaction 7-carboxy-7-deazaguanine + NH4(+) + ATP = 7-cyano-7-deazaguanine + ADP + phosphate + H2O + H(+). It functions in the pathway purine metabolism; 7-cyano-7-deazaguanine biosynthesis. Functionally, catalyzes the ATP-dependent conversion of 7-carboxy-7-deazaguanine (CDG) to 7-cyano-7-deazaguanine (preQ(0)). This chain is 7-cyano-7-deazaguanine synthase, found in Gluconobacter oxydans (strain 621H) (Gluconobacter suboxydans).